Here is a 212-residue protein sequence, read N- to C-terminus: uncharacterized protein (212 aa).

A helical membrane pass occupies residues 186–206 (VITLISFMLFSILFFLIFLIV).

It is found in the membrane. This is an uncharacterized protein from Mycoplasma genitalium (strain ATCC 33530 / DSM 19775 / NCTC 10195 / G37) (Mycoplasmoides genitalium).